A 2217-amino-acid chain; its full sequence is DNA polymerase epsilon catalytic subunit A (2217 aa).

The Zn(2+) site is built by cysteine 2104, cysteine 2107, cysteine 2126, and cysteine 2129. The CysA-type zinc finger occupies 2104 to 2129 (CEYCSYVSDLDLCRDGLDGKFQCPRC). Cysteine 2160, cysteine 2163, cysteine 2175, and cysteine 2177 together coordinate [4Fe-4S] cluster. Residues 2160–2177 (CEKCHTVKRDLMSTNCNC) carry the CysB motif motif.

This sequence belongs to the DNA polymerase type-B family. Heterotetramer. Consists of 4 subunits: POL2, DPB2, DPB3 and DPB4. [4Fe-4S] cluster is required as a cofactor.

The protein resides in the nucleus. It catalyses the reaction DNA(n) + a 2'-deoxyribonucleoside 5'-triphosphate = DNA(n+1) + diphosphate. Functionally, DNA polymerase II participates in chromosomal DNA replication. This Candida glabrata (strain ATCC 2001 / BCRC 20586 / JCM 3761 / NBRC 0622 / NRRL Y-65 / CBS 138) (Yeast) protein is DNA polymerase epsilon catalytic subunit A (POL2).